The chain runs to 198 residues: Recombination protein RecR (198 aa).

The C4-type zinc finger occupies 57-72 (CSVCGHITENDPCYIC). The region spanning 80 to 175 (SVICVVEDDK…KVTRLAQGLS (96 aa)) is the Toprim domain.

It belongs to the RecR family.

May play a role in DNA repair. It seems to be involved in an RecBC-independent recombinational process of DNA repair. It may act with RecF and RecO. The sequence is that of Recombination protein RecR from Staphylococcus aureus (strain JH1).